We begin with the raw amino-acid sequence, 723 residues long: Translation initiation factor IF-2 (723 aa).

Residues 112-138 form a disordered region; the sequence is KIFNNKKNKKQKPQQAPQQEVQKKKEK. The span at 114–123 shows a compositional bias: basic residues; that stretch reads FNNKKNKKQK. Residues 224–393 form the tr-type G domain; sequence ERPPVVTIMG…LLVSEMEELK (170 aa). The segment at 233–240 is G1; the sequence is GHVDHGKT. 233 to 240 is a binding site for GTP; the sequence is GHVDHGKT. Residues 258–262 form a G2 region; it reads GITQH. A G3 region spans residues 279-282; the sequence is DTPG. Residues 279–283 and 333–336 contribute to the GTP site; these read DTPGH and NKID. Residues 333–336 are G4; that stretch reads NKID. A G5 region spans residues 369 to 371; that stretch reads SAL.

This sequence belongs to the TRAFAC class translation factor GTPase superfamily. Classic translation factor GTPase family. IF-2 subfamily.

The protein resides in the cytoplasm. One of the essential components for the initiation of protein synthesis. Protects formylmethionyl-tRNA from spontaneous hydrolysis and promotes its binding to the 30S ribosomal subunits. Also involved in the hydrolysis of GTP during the formation of the 70S ribosomal complex. The protein is Translation initiation factor IF-2 of Anoxybacillus flavithermus (strain DSM 21510 / WK1).